The sequence spans 346 residues: MEREKEQFRKLFIGGLSFETTEESLRNYYEQWGTLTDCVVMRDPASKRSRGFGFVTFSCMNEVDAAMATRPHTIDGRVVEPKRAVAREESAKPGAHVTVKKLFVGGIKEDTEEHHLREYFEEYGKIDSIEIITDKQSGKKRGFAFVTFDDHDPVDKIVLQKYHTINGHNAEVRKALSKQEMQDVQNTRNNRGGNFGFGDSRGGGNFGSGPGGNFRGGSDGYGGGRGYGDNGYNGYGGGQGGGNYGGGPSYGGGRGGGYGGGAGYGNQGGGYGGGYDNYGGGNYGGGGNYNDFGNYNQQSSNYGPMKSGGNFGGNRSMGGGPYGGGNYGPGNASGGNGGGYGGRNRY.

2 consecutive RRM domains span residues 9–92 (RKLF…ESAK) and 100–179 (KKLF…LSKQ). Disordered regions lie at residues 182–217 (QDVQ…FRGG) and 326–346 (NYGP…RNRY). Gly residues predominate over residues 193-217 (GNFGFGDSRGGGNFGSGPGGNFRGG). The interval 297-340 (QQSSNYGPMKSGGNFGGNRSMGGGPYGGGNYGPGNASGGNGGGY) is nuclear targeting sequence.

Its subcellular location is the nucleus. Forms complexes (ribonucleosomes) with at least 20 other different hnRNP and heterogeneous nuclear RNA in the nucleus. The chain is Heterogeneous nuclear ribonucleoprotein A2 homolog 1 from Xenopus laevis (African clawed frog).